The chain runs to 97 residues: Large ribosomal subunit protein uL23 (97 aa).

The protein belongs to the universal ribosomal protein uL23 family. As to quaternary structure, part of the 50S ribosomal subunit. Contacts protein L29, and trigger factor when it is bound to the ribosome.

One of the early assembly proteins it binds 23S rRNA. One of the proteins that surrounds the polypeptide exit tunnel on the outside of the ribosome. Forms the main docking site for trigger factor binding to the ribosome. This Sinorhizobium fredii (strain NBRC 101917 / NGR234) protein is Large ribosomal subunit protein uL23.